Reading from the N-terminus, the 559-residue chain is BTB/POZ domain-containing protein At5g47800 (559 aa).

The 69-residue stretch at 28–96 (NDLVIRINNT…CYDITINLSA (69 aa)) folds into the BTB domain. Positions 199 to 476 (DWWTEDISDL…VQALFFDQES (278 aa)) constitute an NPH3 domain. Tyr-417 carries the phosphotyrosine modification. The segment covering 477 to 489 (GSKGASSRSESQE) has biased composition (low complexity). Disordered regions lie at residues 477-502 (GSKGASSRSESQELFTRGKETPTDEH) and 524-559 (EGCKRGEEKTRSSTDPKKIVWKGTGSEHKHHISRDR). Basic and acidic residues-rich tracts occupy residues 492-502 (TRGKETPTDEH) and 524-541 (EGCKRGEEKTRSSTDPKK).

It belongs to the NPH3 family.

Its pathway is protein modification; protein ubiquitination. In terms of biological role, may act as a substrate-specific adapter of an E3 ubiquitin-protein ligase complex (CUL3-RBX1-BTB) which mediates the ubiquitination and subsequent proteasomal degradation of target proteins. The sequence is that of BTB/POZ domain-containing protein At5g47800 from Arabidopsis thaliana (Mouse-ear cress).